The primary structure comprises 65 residues: Putative primary metabolism protein prl65 (65 aa).

Residues 1–25 (MTKYSKGNKVEYHPIGGPSGTSTST) are disordered.

Functionally, may play a role in primary metabolism. The protein is Putative primary metabolism protein prl65 of Schizosaccharomyces pombe (strain 972 / ATCC 24843) (Fission yeast).